Here is an 808-residue protein sequence, read N- to C-terminus: Zinc finger protein 148 (808 aa).

Disordered stretches follow at residues 15–86 (SPVG…ISQD) and 131–162 (DSLI…SPAK). Over residues 56–73 (AEDDDDEDEEEDDDDDLA) the composition is skewed to acidic residues. Over residues 150–159 (HKKKKRKQRS) the composition is skewed to basic residues. C2H2-type zinc fingers lie at residues 180 to 202 (HICE…VFIH), 208 to 230 (FQCN…EKIH), 236 to 258 (FRCD…KRTH), and 264 to 287 (YQCD…RMCH). Disordered stretches follow at residues 305-338 (RTPE…ASIT), 596-617 (SINS…QAPP), and 705-736 (SFSG…DPQS). Composition is skewed to polar residues over residues 705-718 (SFSG…SVSP) and 725-736 (QVTSPKKTDPQS).

The protein belongs to the krueppel C2H2-type zinc-finger protein family.

The protein localises to the nucleus. Functionally, involved in transcriptional regulation. Represses the transcription of a number of genes. Required for primitive and definitive hematopoiesis during embryonic development. The protein is Zinc finger protein 148 (znf148) of Danio rerio (Zebrafish).